A 474-amino-acid chain; its full sequence is tRNA-2-methylthio-N(6)-dimethylallyladenosine synthase (474 aa).

In terms of domain architecture, MTTase N-terminal spans 3–120 (KKLHIKTWGC…LPEMINSVRG (118 aa)). The [4Fe-4S] cluster site is built by Cys12, Cys49, Cys83, Cys157, Cys161, and Cys164. Residues 143-375 (RAEGPTAFVS…QERINQQAMA (233 aa)) enclose the Radical SAM core domain. A TRAM domain is found at 378–441 (RRMLGTTQRI…PNSLRGKVVR (64 aa)).

It belongs to the methylthiotransferase family. MiaB subfamily. As to quaternary structure, monomer. It depends on [4Fe-4S] cluster as a cofactor.

It is found in the cytoplasm. The catalysed reaction is N(6)-dimethylallyladenosine(37) in tRNA + (sulfur carrier)-SH + AH2 + 2 S-adenosyl-L-methionine = 2-methylsulfanyl-N(6)-dimethylallyladenosine(37) in tRNA + (sulfur carrier)-H + 5'-deoxyadenosine + L-methionine + A + S-adenosyl-L-homocysteine + 2 H(+). Functionally, catalyzes the methylthiolation of N6-(dimethylallyl)adenosine (i(6)A), leading to the formation of 2-methylthio-N6-(dimethylallyl)adenosine (ms(2)i(6)A) at position 37 in tRNAs that read codons beginning with uridine. The protein is tRNA-2-methylthio-N(6)-dimethylallyladenosine synthase of Escherichia coli (strain UTI89 / UPEC).